The sequence spans 56 residues: Large ribosomal subunit protein bL32A (56 aa).

The disordered stretch occupies residues 1–56; sequence MAVPARRTSKAKKNKRRTHKGLTAPGLSRDSETGEYRMSHRISPDGTYKGRTIIEK. The span at 7–20 shows a compositional bias: basic residues; that stretch reads RTSKAKKNKRRTHK. The segment covering 29 to 38 has biased composition (basic and acidic residues); it reads RDSETGEYRM.

The protein belongs to the bacterial ribosomal protein bL32 family.

The sequence is that of Large ribosomal subunit protein bL32A (rpmF1) from Listeria innocua serovar 6a (strain ATCC BAA-680 / CLIP 11262).